Here is a 398-residue protein sequence, read N- to C-terminus: tRNA-specific 2-thiouridylase MnmA (398 aa).

ATP is bound by residues 18–25 (AMSGGVDS) and Leu44. Cys112 acts as the Nucleophile in catalysis. Cys112 and Cys213 are oxidised to a cystine. ATP is bound at residue Gly136. Residues 163–165 (RDQ) form an interaction with tRNA region. Cys213 (cysteine persulfide intermediate) is an active-site residue.

It belongs to the MnmA/TRMU family.

It localises to the cytoplasm. The enzyme catalyses S-sulfanyl-L-cysteinyl-[protein] + uridine(34) in tRNA + AH2 + ATP = 2-thiouridine(34) in tRNA + L-cysteinyl-[protein] + A + AMP + diphosphate + H(+). In terms of biological role, catalyzes the 2-thiolation of uridine at the wobble position (U34) of tRNA, leading to the formation of s(2)U34. The chain is tRNA-specific 2-thiouridylase MnmA from Rhizobium meliloti (strain 1021) (Ensifer meliloti).